The sequence spans 592 residues: Guanylate-binding protein 1 (592 aa).

The segment at 1–311 is GTPase domain (Globular); the sequence is MASEIHMTGP…NAISSGDLPC (311 aa). Positions 35 to 278 constitute a GB1/RHD3-type G domain; that stretch reads TQPMVVVAIV…FCSYIFSNSK (244 aa). Residues 45–52, 67–69, and 97–101 each bind GTP; these read GLYRTGKS, LGS, and DTEGL. Ser-156 is modified (phosphoserine; by PIM1). (Microbial infection) Glycyl lysine isopeptide (Lys-Gly) (interchain with G-Cter in ubiquitin) cross-links involve residues Lys-207, Lys-209, Lys-210, Lys-382, Lys-562, Lys-567, Lys-573, and Lys-587. At Cys-589 the chain carries Cysteine methyl ester. Cys-589 is lipidated: S-farnesyl cysteine. The residue at position 590 (Thr-590) is a Phosphothreonine; by PIM1. Positions 590–592 are cleaved as a propeptide — removed in mature form; that stretch reads TIS.

It belongs to the TRAFAC class dynamin-like GTPase superfamily. GB1/RHD3 GTPase family. GB1 subfamily. Homodimer; homodimerization occurs upon GTP-binding and is required for the second hydrolysis step from GDP to GMP. Undergoes conformational changes and oligomerization upon GTP-binding and hydrolysis. Heterodimer with other family members, including GBP2, GBP3, GBP4 and GBP5. Dimerization regulates subcellular location to membranous structures. Interacts with SQSTM1. Interacts (when phosphorylated) with 14-3-3 protein sigma (SFN); leading to GBP1 retention in the cytosol and inactivation. In terms of processing, isoprenylation is required for proper subcellular location. Post-translationally, phosphorylated at Ser-156 by PIM1 in absence of infection, inhibits GBP1: phosphorylation promotes interaction with 14-3-3 protein sigma (SFN), leading to GBP1 retention in the cytosol. Dephosphorylated in response to infection, liberating GBP1. (Microbial infection) Ubiquitinated by S.flexneri IpaH9.8, leading to its degradation by the proteasome, thereby preventing its ability to promote host defense against bacterial infection.

It is found in the cytoplasmic vesicle membrane. It localises to the golgi apparatus membrane. Its subcellular location is the cell membrane. The protein resides in the cytoplasm. The protein localises to the cytosol. It is found in the secreted. The catalysed reaction is GTP + H2O = GDP + phosphate + H(+). It carries out the reaction GDP + H2O = GMP + phosphate + H(+). Functionally, interferon (IFN)-inducible GTPase that plays important roles in innate immunity against a diverse range of bacterial, viral and protozoan pathogens. Hydrolyzes GTP to GMP in two consecutive cleavage reactions: GTP is first hydrolyzed to GDP and then to GMP in a processive manner. Following infection, recruited to the pathogen-containing vacuoles or vacuole-escaped bacteria and promotes both inflammasome assembly and autophagy. Acts as a positive regulator of inflammasome assembly by facilitating the detection of inflammasome ligands from pathogens. Involved in the lysis of pathogen-containing vacuoles, releasing pathogens into the cytosol. Following pathogen release in the cytosol, forms a protein coat in a GTPase-dependent manner that encapsulates pathogens and promotes the detection of ligands by pattern recognition receptors. Plays a key role in inflammasome assembly in response to infection by Gram-negative bacteria: following pathogen release in the cytosol, forms a protein coat that encapsulates Gram-negative bacteria and directly binds to lipopolysaccharide (LPS), disrupting the O-antigen barrier and unmasking lipid A that is that detected by the non-canonical inflammasome effector CASP4/CASP11. Also promotes recruitment of proteins that mediate bacterial cytolysis, leading to release double-stranded DNA (dsDNA) that activates the AIM2 inflammasome. Involved in autophagy by regulating bacteriolytic peptide generation via its interaction with ubiquitin-binding protein SQSTM1, which delivers monoubiquitinated proteins to autolysosomes for the generation of bacteriolytic peptides. Confers protection to several pathogens, including the bacterial pathogens L.monocytogenes and M.bovis BCG as well as the protozoan pathogen T.gondii. Exhibits antiviral activity against influenza virus. In Homo sapiens (Human), this protein is Guanylate-binding protein 1.